Here is a 485-residue protein sequence, read N- to C-terminus: FAD-dependent monooxygenase elcH (485 aa).

Residues 1-19 form the signal peptide; that stretch reads MFTLRSLAILAVFAATALA. FAD contacts are provided by Asp59 and Gly73. 3 N-linked (GlcNAc...) asparagine glycosylation sites follow: Asn126, Asn147, and Asn157.

This sequence belongs to the paxM FAD-dependent monooxygenase family. Requires FAD as cofactor.

The protein operates within secondary metabolite biosynthesis. Its function is as follows. FAD-dependent monooxygenase; part of the gene cluster that mediates the biosynthesis of elsinochrome C, a perelyenequinone phytotoxin structurally similar to cercosporin. The first step of elsinochrome C biosynthesis is performed by the polyketide synthase elcA which catalyzes the formation of nor-toralactone. The starter unit acyltransferase (SAT) domain of elcA initiates polyketide extension by the selective utilization of acetyl-CoA, which is elongated to the heptaketide in the beta-ketoacyl synthase (KS) domain by successive condensations with six malonyl units introduced by the malonyl acyltransferase (MAT) domain. The product template (PT) domain catalyzes C4-C9 and C2-C11 aldol cyclizations and dehydrations to a trihydroxynaphthalene, which is thought to be delivered to the thioesterase (TE) domain for product release. The bifunctional enzyme elcB then methylates nor-toralactone to toralactone before conducting an unusual oxidative aromatic ring opening. The next step in perylenequinone biosynthesis is an O-methylation at the nascent OH-6 of the elcB product performed by the O-methyltransferase elcD. The oxidative coupling of the two monomeric naphthol units in perylenequinone biosynthesis is catalyzed by the FAD-dependent monooxygenase elcE and the multicopper oxidase elcG. ElcG might catalyze the first intermolecular coupling in a regio- and stereo-selective manner via a phenol radical coupling mechanism and the elcE could forge the second C-C bond intramolecularly via a hydride transfer mechanism. The fasciclin domain-containing protein elcF might also play a role duting this step. The last piece of the puzzle in the biosynthesis of elsinochrome C is the additional annulation by enolate coupling to afford the dihydrobenzo(ghi)perylenequinone system, catalyzed by the FAD-dependent monooxygenase elcH. This is FAD-dependent monooxygenase elcH from Phaeosphaeria nodorum (strain SN15 / ATCC MYA-4574 / FGSC 10173) (Glume blotch fungus).